The chain runs to 249 residues: Cell division protein FtsQ (249 aa).

The Cytoplasmic segment spans residues methionine 1–phenylalanine 6. The helical transmembrane segment at alanine 7–serine 23 threads the bilayer. Residues glutamine 24 to isoleucine 249 lie on the Periplasmic side of the membrane. In terms of domain architecture, POTRA spans lysine 29–glutamine 98.

The protein belongs to the FtsQ/DivIB family. FtsQ subfamily. In terms of assembly, part of a complex composed of FtsB, FtsL and FtsQ.

The protein resides in the cell inner membrane. Essential cell division protein. May link together the upstream cell division proteins, which are predominantly cytoplasmic, with the downstream cell division proteins, which are predominantly periplasmic. May control correct divisome assembly. In Methylomonas methanica (strain DSM 25384 / MC09), this protein is Cell division protein FtsQ.